Here is a 189-residue protein sequence, read N- to C-terminus: GTP cyclohydrolase 1 (189 aa).

Zn(2+) contacts are provided by cysteine 79, histidine 82, and cysteine 150.

It belongs to the GTP cyclohydrolase I family. Homomer.

The catalysed reaction is GTP + H2O = 7,8-dihydroneopterin 3'-triphosphate + formate + H(+). The protein operates within cofactor biosynthesis; 7,8-dihydroneopterin triphosphate biosynthesis; 7,8-dihydroneopterin triphosphate from GTP: step 1/1. This is GTP cyclohydrolase 1 from Rickettsia africae (strain ESF-5).